The following is a 515-amino-acid chain: 2-isopropylmalate synthase (515 aa).

One can recognise a Pyruvate carboxyltransferase domain in the interval Val-5–His-267. 4 residues coordinate Mn(2+): Asp-14, His-202, His-204, and Asn-238. The regulatory domain stretch occupies residues Val-392 to His-515.

It belongs to the alpha-IPM synthase/homocitrate synthase family. LeuA type 1 subfamily. Homodimer. The cofactor is Mn(2+).

It is found in the cytoplasm. The enzyme catalyses 3-methyl-2-oxobutanoate + acetyl-CoA + H2O = (2S)-2-isopropylmalate + CoA + H(+). Its pathway is amino-acid biosynthesis; L-leucine biosynthesis; L-leucine from 3-methyl-2-oxobutanoate: step 1/4. Catalyzes the condensation of the acetyl group of acetyl-CoA with 3-methyl-2-oxobutanoate (2-ketoisovalerate) to form 3-carboxy-3-hydroxy-4-methylpentanoate (2-isopropylmalate). This chain is 2-isopropylmalate synthase, found in Haemophilus influenzae (strain ATCC 51907 / DSM 11121 / KW20 / Rd).